The primary structure comprises 279 residues: Fatty acid metabolism regulator protein (279 aa).

An HTH gntR-type domain is found at 6 to 74 (KSPAGFAEKY…HGKPTKVNQF (69 aa)). The H-T-H motif DNA-binding region spans 34–53 (ERELSELIGVTRTTLREVLQ).

As to quaternary structure, homodimer.

The protein localises to the cytoplasm. Functionally, multifunctional regulator of fatty acid metabolism. In Vibrio vulnificus (strain CMCP6), this protein is Fatty acid metabolism regulator protein.